The chain runs to 347 residues: Iron-sulfur cluster assembly protein SufC (347 aa).

The ABC transporter domain maps to 100 to 346; it reads LEIKDLHAIE…ENKGYSQFLK (247 aa). Residue 134 to 141 coordinates ATP; that stretch reads GRNGSGKS.

This sequence belongs to the ABC transporter superfamily. Ycf16 family. Component of a complex composed of SufB, SufC and SufD in a stoichiometric ratio of 1:2:1. Interacts with SufB. Interacts with SufD; the interaction enhances the ATPase activity of SufC. Post-translationally, proteolytically cleaved.

The protein localises to the plastid. The protein resides in the apicoplast. The enzyme catalyses ATP + H2O = ADP + phosphate + H(+). Its pathway is cofactor biosynthesis; iron-sulfur cluster biosynthesis. Functionally, participates in the sulfur mobilization (SUF) pathway for iron-sulfur (Fe-S) cluster biogenesis. As part of a complex consisting of SufB-SufC(2)-SufD, involved in assembly of [4Fe-4S] clusters. Exhibits ATPase activity. This is Iron-sulfur cluster assembly protein SufC from Plasmodium falciparum (isolate 3D7).